Here is a 341-residue protein sequence, read N- to C-terminus: Alanine racemase (341 aa).

The active-site Proton acceptor; specific for D-alanine is K33. The residue at position 33 (K33) is an N6-(pyridoxal phosphate)lysine. R126 is a substrate binding site. Catalysis depends on Y236, which acts as the Proton acceptor; specific for L-alanine. M284 contributes to the substrate binding site.

It belongs to the alanine racemase family. Pyridoxal 5'-phosphate is required as a cofactor.

It carries out the reaction L-alanine = D-alanine. The protein operates within amino-acid biosynthesis; D-alanine biosynthesis; D-alanine from L-alanine: step 1/1. Catalyzes the interconversion of L-alanine and D-alanine. This chain is Alanine racemase (alr), found in Aquifex pyrophilus.